A 306-amino-acid polypeptide reads, in one-letter code: Large ribosomal subunit protein bL19m (306 aa).

Positions Glu-34–Ala-43 are enriched in basic and acidic residues. The disordered stretch occupies residues Glu-34–Asn-53.

Belongs to the bacterial ribosomal protein bL19 family. In terms of assembly, component of the mitochondrial ribosome large subunit (39S) which comprises a 16S rRNA and about 50 distinct proteins.

Its subcellular location is the mitochondrion. This chain is Large ribosomal subunit protein bL19m (mRpL19), found in Drosophila melanogaster (Fruit fly).